A 420-amino-acid chain; its full sequence is Tyrosine--tRNA ligase (420 aa).

Tyrosine 33 lines the L-tyrosine pocket. The 'HIGH' region signature appears at 38–47 (PTADSLHIGH). 2 residues coordinate L-tyrosine: tyrosine 168 and glutamine 172. Residues 231 to 235 (KFGKT) carry the 'KMSKS' region motif. Lysine 234 is an ATP binding site. The S4 RNA-binding domain occupies 353-419 (MLLVDALIKV…GKKNYYLVKL (67 aa)).

The protein belongs to the class-I aminoacyl-tRNA synthetase family. TyrS type 1 subfamily. Homodimer.

It is found in the cytoplasm. It catalyses the reaction tRNA(Tyr) + L-tyrosine + ATP = L-tyrosyl-tRNA(Tyr) + AMP + diphosphate + H(+). In terms of biological role, catalyzes the attachment of tyrosine to tRNA(Tyr) in a two-step reaction: tyrosine is first activated by ATP to form Tyr-AMP and then transferred to the acceptor end of tRNA(Tyr). The chain is Tyrosine--tRNA ligase from Desulfitobacterium hafniense (strain DSM 10664 / DCB-2).